A 70-amino-acid polypeptide reads, in one-letter code: Cytochrome c oxidase subunit 8B, mitochondrial (70 aa).

A mitochondrion-targeting transit peptide spans 1-24 (MPRLPPILRLLQAPEKYTVIPKAR). The Mitochondrial matrix portion of the chain corresponds to 25 to 35 (ISSKPAKSPTS). A helical transmembrane segment spans residues 36–59 (AMDQAVGMSVIIAGFMVPAGWVLS). The Mitochondrial intermembrane portion of the chain corresponds to 60 to 70 (HLESYKRSSAA).

Belongs to the cytochrome c oxidase VIII family. Component of the cytochrome c oxidase (complex IV, CIV), a multisubunit enzyme composed of 14 subunits. The complex is composed of a catalytic core of 3 subunits MT-CO1, MT-CO2 and MT-CO3, encoded in the mitochondrial DNA, and 11 supernumerary subunits COX4I, COX5A, COX5B, COX6A, COX6B, COX6C, COX7A, COX7B, COX7C, COX8 and NDUFA4, which are encoded in the nuclear genome. The complex exists as a monomer or a dimer and forms supercomplexes (SCs) in the inner mitochondrial membrane with NADH-ubiquinone oxidoreductase (complex I, CI) and ubiquinol-cytochrome c oxidoreductase (cytochrome b-c1 complex, complex III, CIII), resulting in different assemblies (supercomplex SCI(1)III(2)IV(1) and megacomplex MCI(2)III(2)IV(2)).

Its subcellular location is the mitochondrion inner membrane. The protein operates within energy metabolism; oxidative phosphorylation. Functionally, component of the cytochrome c oxidase, the last enzyme in the mitochondrial electron transport chain which drives oxidative phosphorylation. The respiratory chain contains 3 multisubunit complexes succinate dehydrogenase (complex II, CII), ubiquinol-cytochrome c oxidoreductase (cytochrome b-c1 complex, complex III, CIII) and cytochrome c oxidase (complex IV, CIV), that cooperate to transfer electrons derived from NADH and succinate to molecular oxygen, creating an electrochemical gradient over the inner membrane that drives transmembrane transport and the ATP synthase. Cytochrome c oxidase is the component of the respiratory chain that catalyzes the reduction of oxygen to water. Electrons originating from reduced cytochrome c in the intermembrane space (IMS) are transferred via the dinuclear copper A center (CU(A)) of subunit 2 and heme A of subunit 1 to the active site in subunit 1, a binuclear center (BNC) formed by heme A3 and copper B (CU(B)). The BNC reduces molecular oxygen to 2 water molecules using 4 electrons from cytochrome c in the IMS and 4 protons from the mitochondrial matrix. In Rattus norvegicus (Rat), this protein is Cytochrome c oxidase subunit 8B, mitochondrial (Cox8b).